Consider the following 127-residue polypeptide: Ribonuclease VapC6 (127 aa).

A PINc domain is found at 26 to 120; it reads EPQRAEFCRS…ERHLPDIRVR (95 aa). Asp86 is a Mg(2+) binding site.

This sequence belongs to the PINc/VapC protein family. It depends on Mg(2+) as a cofactor.

In terms of biological role, toxic component of a type II toxin-antitoxin (TA) system. An RNase. The cognate antitoxin is VapB6. The sequence is that of Ribonuclease VapC6 from Mycobacterium tuberculosis (strain CDC 1551 / Oshkosh).